A 967-amino-acid chain; its full sequence is Isoleucine--tRNA ligase (967 aa).

The 'HIGH' region signature appears at 64–74 (PYANGNIHIGH). E600 is a binding site for L-isoleucyl-5'-AMP. The short motif at 641 to 645 (KQSKS) is the 'KMSKS' region element. Residue K644 participates in ATP binding.

Belongs to the class-I aminoacyl-tRNA synthetase family. IleS type 1 subfamily. As to quaternary structure, monomer.

The protein localises to the cytoplasm. It carries out the reaction tRNA(Ile) + L-isoleucine + ATP = L-isoleucyl-tRNA(Ile) + AMP + diphosphate. Catalyzes the attachment of isoleucine to tRNA(Ile). As IleRS can inadvertently accommodate and process structurally similar amino acids such as valine, to avoid such errors it has two additional distinct tRNA(Ile)-dependent editing activities. One activity is designated as 'pretransfer' editing and involves the hydrolysis of activated Val-AMP. The other activity is designated 'posttransfer' editing and involves deacylation of mischarged Val-tRNA(Ile). This chain is Isoleucine--tRNA ligase, found in Agrobacterium fabrum (strain C58 / ATCC 33970) (Agrobacterium tumefaciens (strain C58)).